A 356-amino-acid chain; its full sequence is Chitin elicitor-binding protein (356 aa).

The first 28 residues, 1–28 (MASLTAALATPAAAALLLLVLLAAPASA), serve as a signal peptide directing secretion. Asn30 carries an N-linked (GlcNAc...) asparagine glycan. Disulfide bonds link Cys33–Cys100, Cys41–Cys164, Cys98–Cys162, and Cys100–Cys164. 50-51 (PN) lines the chitin pocket. N-linked (GlcNAc...) asparagine glycans are attached at residues Asn63 and Asn89. LysM domains follow at residues 111–158 (PIYV…TLWI) and 175–219 (LAYS…ILDV). Chitin is bound by residues 117 to 123 (PQDGLDA), Asn142, 145 to 152 (PDPNKINV), Thr155, and Gly182. Asn151 carries N-linked (GlcNAc...) asparagine glycosylation. An N-linked (GlcNAc...) asparagine glycan is attached at Asn184. Chitin is bound by residues Ser186 and 211–213 (LQM). 2 cysteine pairs are disulfide-bonded: Cys224–Cys257 and Cys252–Cys274. N-linked (GlcNAc...) asparagine glycans are attached at residues Asn265, Asn281, Asn290, Asn306, and Asn319. The helical transmembrane segment at 336-356 (RSMWSMSVISFHMVLIIICFL) threads the bilayer.

Forms homooligomer. Interacts with CERK1. Binds to chitin oligosaccharide elicitor. Interacts with LYP4 and LYP6. Post-translationally, N-glycosylated. Expressed in seedlings, roots, shoots, stems and flowers.

The protein resides in the cell membrane. Functionally, chitin elicitor-binding protein involved in the perception and transduction of chitin oligosaccharide elicitor signal for defense responses. This chain is Chitin elicitor-binding protein, found in Oryza sativa subsp. japonica (Rice).